The following is a 389-amino-acid chain: Globin-like protein 6 (389 aa).

A compositionally biased stretch (polar residues) spans 1-15; that stretch reads MGNQSTKSTHGTTRV. 3 disordered regions span residues 1-38, 96-123, and 143-185; these read MGNQ…RSAS, RTSK…SVDS, and TVSS…SSNP. Residues 16 to 25 are compositionally biased toward basic residues; that stretch reads SHSKSAHHNS. Residues 196–347 form the Globin domain; sequence HLTQPQILFV…VTEQLKEGFQ (152 aa). Residues histidine 254 and histidine 286 each coordinate heme b. Positions 367–389 are disordered; that stretch reads SSFEISTKTKQSDMKRFHTLDNM. The segment covering 376-389 has biased composition (basic and acidic residues); that stretch reads KQSDMKRFHTLDNM.

Belongs to the globin family. In terms of tissue distribution, expressed in the head and tail neurons and nerve cord.

May play a role as physiological sensor for oxygen via redox signaling and/or electron transport. This Caenorhabditis elegans protein is Globin-like protein 6.